A 242-amino-acid polypeptide reads, in one-letter code: Ubiquitin-conjugating enzyme E2 6 (242 aa).

The Cytoplasmic segment spans residues 1 to 217 (MASRQAYKRL…QPAGNGTTSN (217 aa)). The UBC core domain maps to 5–163 (QAYKRLSKEY…FPELAEQNRR (159 aa)). Cysteine 87 serves as the catalytic Glycyl thioester intermediate. The chain crosses the membrane as a helical span at residues 218 to 240 (SIGRSLLFVLFSLAALLVAVCYT).

Belongs to the ubiquitin-conjugating enzyme family.

The protein resides in the endoplasmic reticulum membrane. It carries out the reaction S-ubiquitinyl-[E1 ubiquitin-activating enzyme]-L-cysteine + [E2 ubiquitin-conjugating enzyme]-L-cysteine = [E1 ubiquitin-activating enzyme]-L-cysteine + S-ubiquitinyl-[E2 ubiquitin-conjugating enzyme]-L-cysteine.. Its pathway is protein modification; protein ubiquitination. Functionally, catalyzes the covalent attachment of ubiquitin to other proteins. Functions in degradation of misfolded or regulated proteins localized in the endoplasmic reticulum (ER) lumen or membrane via the ubiquitin-proteasome system. Cognate E2 conjugating enzyme for the DOA10 ubiquitin ligase complex, which is part of the ERAD-C pathway responsible for the rapid degradation of membrane proteins with misfolded cytoplasmic domains. In Eremothecium gossypii (strain ATCC 10895 / CBS 109.51 / FGSC 9923 / NRRL Y-1056) (Yeast), this protein is Ubiquitin-conjugating enzyme E2 6 (UBC6).